Here is a 206-residue protein sequence, read N- to C-terminus: Sclerostin domain-containing protein 1 (206 aa).

The first 23 residues, 1–23 (MLPPAIHFYLLPLACILMKSCLA), serve as a signal peptide directing secretion. Residue N47 is glycosylated (N-linked (GlcNAc...) asparagine). 4 cysteine pairs are disulfide-bonded: C75/C133, C89/C147, C100/C163, and C104/C165. Residues 75–170 (CRELRSTKYI…TACKCKRYTR (96 aa)) form the CTCK domain. The N-linked (GlcNAc...) asparagine glycan is linked to N173. A disordered region spans residues 176–206 (SHNFESMSPAKPVQHHRERKRASKSSKHSMS). Residues 188 to 206 (VQHHRERKRASKSSKHSMS) are compositionally biased toward basic residues.

It belongs to the sclerostin family. Interacts with BMP2, BMP4, BMP6 and BMP7 with high affinity.

It is found in the secreted. In terms of biological role, directly antagonizes activity of BMP2, BMP4, BMP6 and BMP7 in a dose-dependent manner. Enhances Wnt signaling and inhibits TGF-beta signaling. May be involved in the onset of endometrial receptivity for implantation/sensitization for the decidual cell reaction. The chain is Sclerostin domain-containing protein 1 (SOSTDC1) from Pongo abelii (Sumatran orangutan).